The primary structure comprises 89 residues: Large ribosomal subunit protein eL34 (89 aa).

The protein belongs to the eukaryotic ribosomal protein eL34 family.

In Methanococcus vannielii (strain ATCC 35089 / DSM 1224 / JCM 13029 / OCM 148 / SB), this protein is Large ribosomal subunit protein eL34.